A 1059-amino-acid polypeptide reads, in one-letter code: Carbamoyl phosphate synthase large chain (1059 aa).

The segment at 1–401 (MPKRKDIQKI…SLLKACRSLE (401 aa)) is carboxyphosphate synthetic domain. 12 residues coordinate ATP: arginine 129, arginine 169, glycine 175, glycine 176, arginine 208, isoleucine 210, glutamate 215, glycine 241, isoleucine 242, histidine 243, glutamine 284, and glutamate 298. The 195-residue stretch at 133–327 (KQLMEELGQP…IAKLAAKIAV (195 aa)) folds into the ATP-grasp 1 domain. Mg(2+) contacts are provided by glutamine 284, glutamate 298, and asparagine 300. Mn(2+)-binding residues include glutamine 284, glutamate 298, and asparagine 300. Positions 402–546 (VCVDHNELPA…YSTYGFENES (145 aa)) are oligomerization domain. The tract at residues 547–929 (VKSSKESVLV…ALYKAFEASY (383 aa)) is carbamoyl phosphate synthetic domain. The region spanning 671–861 (EQALKELDIP…MAQVATRLIL (191 aa)) is the ATP-grasp 2 domain. The ATP site is built by arginine 707, serine 746, isoleucine 748, glutamate 752, glycine 777, valine 778, histidine 779, serine 780, glutamine 820, and glutamate 832. Glutamine 820, glutamate 832, and asparagine 834 together coordinate Mg(2+). Mn(2+)-binding residues include glutamine 820, glutamate 832, and asparagine 834. One can recognise an MGS-like domain in the interval 930–1059 (LHLPNFGNIV…ESRSFTTEAI (130 aa)). Residues 930-1059 (LHLPNFGNIV…ESRSFTTEAI (130 aa)) are allosteric domain.

The protein belongs to the CarB family. As to quaternary structure, composed of two chains; the small (or glutamine) chain promotes the hydrolysis of glutamine to ammonia, which is used by the large (or ammonia) chain to synthesize carbamoyl phosphate. Tetramer of heterodimers (alpha,beta)4. Mg(2+) serves as cofactor. It depends on Mn(2+) as a cofactor.

It carries out the reaction hydrogencarbonate + L-glutamine + 2 ATP + H2O = carbamoyl phosphate + L-glutamate + 2 ADP + phosphate + 2 H(+). The enzyme catalyses hydrogencarbonate + NH4(+) + 2 ATP = carbamoyl phosphate + 2 ADP + phosphate + 2 H(+). Its pathway is amino-acid biosynthesis; L-arginine biosynthesis; carbamoyl phosphate from bicarbonate: step 1/1. It functions in the pathway pyrimidine metabolism; UMP biosynthesis via de novo pathway; (S)-dihydroorotate from bicarbonate: step 1/3. Its function is as follows. Large subunit of the glutamine-dependent carbamoyl phosphate synthetase (CPSase). CPSase catalyzes the formation of carbamoyl phosphate from the ammonia moiety of glutamine, carbonate, and phosphate donated by ATP, constituting the first step of 2 biosynthetic pathways, one leading to arginine and/or urea and the other to pyrimidine nucleotides. The large subunit (synthetase) binds the substrates ammonia (free or transferred from glutamine from the small subunit), hydrogencarbonate and ATP and carries out an ATP-coupled ligase reaction, activating hydrogencarbonate by forming carboxy phosphate which reacts with ammonia to form carbamoyl phosphate. The chain is Carbamoyl phosphate synthase large chain from Streptococcus sanguinis (strain SK36).